The sequence spans 380 residues: Queuine tRNA-ribosyltransferase (380 aa).

The Proton acceptor role is filled by aspartate 96. Residues aspartate 96–phenylalanine 100, aspartate 150, glutamine 193, and glycine 220 each bind substrate. The RNA binding stretch occupies residues glycine 251–serine 257. Residue aspartate 270 is the Nucleophile of the active site. The segment at threonine 275–arginine 279 is RNA binding; important for wobble base 34 recognition. Positions 308, 310, 313, and 339 each coordinate Zn(2+).

This sequence belongs to the queuine tRNA-ribosyltransferase family. In terms of assembly, homodimer. Within each dimer, one monomer is responsible for RNA recognition and catalysis, while the other monomer binds to the replacement base PreQ1. It depends on Zn(2+) as a cofactor.

It catalyses the reaction 7-aminomethyl-7-carbaguanine + guanosine(34) in tRNA = 7-aminomethyl-7-carbaguanosine(34) in tRNA + guanine. It functions in the pathway tRNA modification; tRNA-queuosine biosynthesis. Its function is as follows. Catalyzes the base-exchange of a guanine (G) residue with the queuine precursor 7-aminomethyl-7-deazaguanine (PreQ1) at position 34 (anticodon wobble position) in tRNAs with GU(N) anticodons (tRNA-Asp, -Asn, -His and -Tyr). Catalysis occurs through a double-displacement mechanism. The nucleophile active site attacks the C1' of nucleotide 34 to detach the guanine base from the RNA, forming a covalent enzyme-RNA intermediate. The proton acceptor active site deprotonates the incoming PreQ1, allowing a nucleophilic attack on the C1' of the ribose to form the product. After dissociation, two additional enzymatic reactions on the tRNA convert PreQ1 to queuine (Q), resulting in the hypermodified nucleoside queuosine (7-(((4,5-cis-dihydroxy-2-cyclopenten-1-yl)amino)methyl)-7-deazaguanosine). The protein is Queuine tRNA-ribosyltransferase of Streptococcus pneumoniae (strain Taiwan19F-14).